The following is a 339-amino-acid chain: MQTKYQYGIYIGRFQPFHLGHLRTLNLALEKAEQVIIILGSHRVAADTRNPWRSPERMAMIEACLSPQILKRVHFLTVRDWLYSDNLWLAAVQQQVLKITGGSNSVVVLGHRKDASSYYLNLFPQWDYLETGHYPDFSSTAIRGAYFEGKEGDYLDKVPPAIADYLQTFQKSERYIALCDEYQFLQAYKQAWATAPYAPTFITTDAVVVQAGHVLMVRRQAKPGLGLIALPGGFIKQNETLVEGMLRELKEETRLKVPLPVLRGSIVDSHVFDAPGRSLRGRTITHAYFIQLPGGELPAVKGGDDAQKAWWMSLADLYAQEEQIYEDHFQIIQHFVSKV.

The segment at 1-183 is NMN adenylyltransferase; sequence MQTKYQYGIY…RYIALCDEYQ (183 aa). The Nudix hydrolase domain occupies 199–335; sequence PTFITTDAVV…EDHFQIIQHF (137 aa). Residues 233 to 254 carry the Nudix box motif; sequence GFIKQNETLVEGMLRELKEETR.

This sequence in the N-terminal section; belongs to the archaeal NMN adenylyltransferase family. It depends on Mg(2+) as a cofactor. The cofactor is Mn(2+).

Its subcellular location is the cytoplasm. It catalyses the reaction beta-nicotinamide D-ribonucleotide + ATP + H(+) = diphosphate + NAD(+). Its pathway is cofactor biosynthesis; NAD(+) biosynthesis; NAD(+) from nicotinamide D-ribonucleotide: step 1/1. Its function is as follows. The Nudix hydrolase domain is active on ADP-ribose, (2')-phospho-ADP-ribose, IDP-ribose and NADPH. This chain is Bifunctional NMN adenylyltransferase/Nudix hydrolase, found in Synechocystis sp. (strain ATCC 27184 / PCC 6803 / Kazusa).